Consider the following 484-residue polypeptide: Trigger factor (484 aa).

The PPIase FKBP-type domain occupies 165–244 (GDFVQIDLTA…VQSVKERELP (80 aa)). The disordered stretch occupies residues 429–484 (DAVSEEPADADAEAVVADAPAEEAAEAPAAEEAPAEKPKKKAPAKKKASEKAADSE). Positions 430–440 (AVSEEPADADA) are enriched in acidic residues. Residues 475–484 (KASEKAADSE) show a composition bias toward basic and acidic residues.

This sequence belongs to the FKBP-type PPIase family. Tig subfamily.

Its subcellular location is the cytoplasm. The enzyme catalyses [protein]-peptidylproline (omega=180) = [protein]-peptidylproline (omega=0). Involved in protein export. Acts as a chaperone by maintaining the newly synthesized protein in an open conformation. Functions as a peptidyl-prolyl cis-trans isomerase. This is Trigger factor from Clavibacter michiganensis subsp. michiganensis (strain NCPPB 382).